We begin with the raw amino-acid sequence, 223 residues long: Ras-related protein Rab-32 (223 aa).

Position 2 is an N-acetylalanine (alanine 2). Valine 34, glycine 35, lysine 36, threonine 37, serine 38, serine 49, glutamine 50, tyrosine 52, and threonine 55 together coordinate GTP. Threonine 37 serves as a coordination point for Mg(2+). A Switch 1 motif is present at residues 46 to 60 (QLFSQHYRATIGVDF). Threonine 55 lines the Mg(2+) pocket. Serine 69 is modified (phosphoserine). Aspartate 79 contributes to the Mg(2+) binding site. Positions 82, 141, 142, 144, 173, and 174 each coordinate GTP. Residues 82–95 (GQERFGNMTRVYYK) carry the Switch 2 motif. The segment at 176–195 (NINIDEATRFLVENMLANQQ) is PKA-RII subunit binding domain. S-geranylgeranyl cysteine attachment occurs at residues cysteine 222 and cysteine 223.

Belongs to the small GTPase superfamily. Rab family. Interacts with ANKRD27. A decreased interaction with ANKRD27 seen in the presence of SGSM2. Interacts with LRRK2 (via N-terminus); this interaction results in stimulation of RAB10 phosphorylation by LRRK2. The cofactor is Mg(2+). As to expression, widely expressed with highest levels in liver. Strong expression also found in melanocyte, platelet, mast cell and fibroblast cell lines.

The protein localises to the mitochondrion. The protein resides in the mitochondrion outer membrane. It is found in the cytoplasmic vesicle. It localises to the phagosome. Its subcellular location is the phagosome membrane. The protein localises to the melanosome. The protein resides in the melanosome membrane. The catalysed reaction is GTP + H2O = GDP + phosphate + H(+). Its activity is regulated as follows. Regulated by guanine the nucleotide exchange factor (GEF) BLOC-3 complex composed of HPS1 and HPS4 which promote the exchange of bound GDP for free GTP. Regulated by the GTPase activating protein (GAP) SGSM2/RUTBC1 which increases the GTP hydrolysis activity. Inhibited by GDP dissociation inhibitors (GDIs) which prevent Rab-GDP dissociation. The small GTPases Rab are key regulators of intracellular membrane trafficking, from the formation of transport vesicles to their fusion with membranes. Rabs cycle between an inactive GDP-bound form and an active GTP-bound form that is able to recruit to membranes different set of downstream effectors directly responsible for vesicle formation, movement, tethering and fusion. Also acts as an A-kinase anchoring protein by binding to the type II regulatory subunit of protein kinase A and anchoring it to the mitochondrion. Also involved in synchronization of mitochondrial fission. Plays a role in the maturation of phagosomes that engulf pathogens, such as S.aureus and M.tuberculosis. Plays an important role in the control of melanin production and melanosome biogenesis. In concert with RAB38, regulates the proper trafficking of melanogenic enzymes TYR, TYRP1 and DCT/TYRP2 to melanosomes in melanocytes. Stimulates phosphorylation of RAB10 'Thr-73' by LRRK2. In Mus musculus (Mouse), this protein is Ras-related protein Rab-32.